Here is a 251-residue protein sequence, read N- to C-terminus: uncharacterized protein (251 aa).

Disordered regions lie at residues 1-92 (MGRP…PGSA) and 137-251 (KPTP…LRTH). Positions 69–92 (AEGAPALLGGSPSSGSPGHPPGSA) are enriched in low complexity. Residues 155 to 172 (SESSWQLPQLPAGSTSGS) are compositionally biased toward polar residues.

This is an uncharacterized protein from Homo sapiens (Human).